The primary structure comprises 759 residues: Holliday junction resolvase YEN1 (759 aa).

3 disordered regions span residues 62–83 (RSRSRSPTRSPRDSDIDSSQEY), 498–518 (SQSPLKRSNSPSRSKSPTRRQ), and 683–702 (KSRTTNAEKNPPESGLKSRS). A compositionally biased stretch (low complexity) spans 500 to 512 (SPLKRSNSPSRSK). Phosphoserine occurs at positions 730 and 731.

The protein belongs to the XPG/RAD2 endonuclease family. GEN subfamily.

It is found in the cytoplasm. It localises to the nucleus. Its function is as follows. Endonuclease which resolves Holliday junctions by the introduction of symmetrically related cuts across the junction point, to produce nicked duplex products in which the nicks can be readily ligated. Four-way DNA intermediates, also known as Holliday junctions, are formed during homologous recombination and DNA repair, and their resolution is necessary for proper chromosome segregation. Involved in DNA-damage repair in vegetative cells. The protein is Holliday junction resolvase YEN1 (YEN1) of Saccharomyces cerevisiae (strain ATCC 204508 / S288c) (Baker's yeast).